The chain runs to 201 residues: Peptidyl-tRNA hydrolase (201 aa).

TRNA is bound at residue Y15. The active-site Proton acceptor is the H20. Positions 66, 68, and 114 each coordinate tRNA.

It belongs to the PTH family. Monomer.

The protein resides in the cytoplasm. It carries out the reaction an N-acyl-L-alpha-aminoacyl-tRNA + H2O = an N-acyl-L-amino acid + a tRNA + H(+). Hydrolyzes ribosome-free peptidyl-tRNAs (with 1 or more amino acids incorporated), which drop off the ribosome during protein synthesis, or as a result of ribosome stalling. Functionally, catalyzes the release of premature peptidyl moieties from peptidyl-tRNA molecules trapped in stalled 50S ribosomal subunits, and thus maintains levels of free tRNAs and 50S ribosomes. This is Peptidyl-tRNA hydrolase from Burkholderia thailandensis (strain ATCC 700388 / DSM 13276 / CCUG 48851 / CIP 106301 / E264).